Reading from the N-terminus, the 382-residue chain is Fetuin-B (382 aa).

The signal sequence occupies residues 1–15 (MGLLLPLALCILVLC). Cystatin fetuin-B-type domains lie at 25–138 (ALNP…YNCT) and 149–255 (MTCP…VTCD). A glycan (N-linked (GlcNAc...) asparagine) is linked at asparagine 37. 3 disulfide bridges follow: cysteine 93-cysteine 104, cysteine 117-cysteine 137, and cysteine 151-cysteine 154. An N-linked (GlcNAc...) asparagine glycan is attached at asparagine 136. An N-linked (GlcNAc...) asparagine glycan is attached at asparagine 182. Intrachain disulfides connect cysteine 216-cysteine 224 and cysteine 237-cysteine 254. Polar residues-rich tracts occupy residues 262–276 (PATG…QKPT) and 286–295 (QKNTPPTDSP). 2 disordered regions span residues 262 to 320 (PATG…EKGP) and 363 to 382 (ARTA…VLPP). Threonine 289 and threonine 292 each carry an O-linked (GalNAc...) threonine glycan. Residues 310–320 (LDDKNSQEKGP) show a composition bias toward basic and acidic residues. Serine 315 bears the Phosphoserine mark.

This sequence belongs to the fetuin family. In terms of tissue distribution, liver and testis.

Its subcellular location is the secreted. In terms of biological role, protease inhibitor required for egg fertilization. Required to prevent premature zona pellucida hardening before fertilization, probably by inhibiting the protease activity of ASTL, a protease that mediates the cleavage of ZP2 and triggers zona pellucida hardening. The polypeptide is Fetuin-B (FETUB) (Homo sapiens (Human)).